A 506-amino-acid polypeptide reads, in one-letter code: Aspartic proteinase A1 (506 aa).

Positions 1-24 (MKIYSRTVAVSLIVSFLLCFSAFA) are cleaved as a signal peptide. A propeptide spans 25–64 (ERNDGTFRVGLKKLKLDSKNRLAARVESKQEKPLRAYRLG) (activation peptide). Positions 82 to 503 (YYGEIAIGTP…DFGNEQVGFA (422 aa)) constitute a Peptidase A1 domain. Aspartate 100 is an active-site residue. 2 disulfide bridges follow: cysteine 113–cysteine 119 and cysteine 278–cysteine 282. The active site involves aspartate 287. One can recognise a Saposin B-type domain in the interval 312-417 (VVSQQCKTVV…NELCERLPSP (106 aa)). 4 cysteine pairs are disulfide-bonded: cysteine 317-cysteine 411, cysteine 342-cysteine 383, cysteine 348-cysteine 380, and cysteine 425-cysteine 462. Asparagine 397 carries N-linked (GlcNAc...) asparagine glycosylation.

This sequence belongs to the peptidase A1 family. Expressed in roots, leaves, stems, petals, carpels, seed pods and dry seeds.

The protein localises to the vacuole. Its function is as follows. Involved in the breakdown of propeptides of storage proteins in protein-storage vacuoles. Possesses aspartic protease activity in vitro. The protein is Aspartic proteinase A1 (APA1) of Arabidopsis thaliana (Mouse-ear cress).